A 312-amino-acid polypeptide reads, in one-letter code: D-alanine--D-alanine ligase (312 aa).

In terms of domain architecture, ATP-grasp spans K99–M304. Residue L131–T186 participates in ATP binding. Mg(2+) contacts are provided by D257, E271, and N273.

It belongs to the D-alanine--D-alanine ligase family. The cofactor is Mg(2+). It depends on Mn(2+) as a cofactor.

The protein localises to the cytoplasm. The enzyme catalyses 2 D-alanine + ATP = D-alanyl-D-alanine + ADP + phosphate + H(+). The protein operates within cell wall biogenesis; peptidoglycan biosynthesis. Its function is as follows. Cell wall formation. The protein is D-alanine--D-alanine ligase of Carboxydothermus hydrogenoformans (strain ATCC BAA-161 / DSM 6008 / Z-2901).